The following is a 160-amino-acid chain: Keratin-associated protein 13-4 (160 aa).

4 consecutive repeat copies span residues 41-50 (CQLRSSLYRD), 51-60 (CQKTCWEPAS), 61-70 (CQKSCYRPRT), and 77-86 (CQTTCSGSLG). The 4 X 10 AA approximate repeats stretch occupies residues 41–86 (CQLRSSLYRDCQKTCWEPASCQKSCYRPRTSILCCPCQTTCSGSLG).

It belongs to the PMG family. In terms of assembly, interacts with hair keratins.

Functionally, in the hair cortex, hair keratin intermediate filaments are embedded in an interfilamentous matrix, consisting of hair keratin-associated proteins (KRTAP), which are essential for the formation of a rigid and resistant hair shaft through their extensive disulfide bond cross-linking with abundant cysteine residues of hair keratins. The matrix proteins include the high-sulfur and high-glycine-tyrosine keratins. This chain is Keratin-associated protein 13-4 (KRTAP13-4), found in Homo sapiens (Human).